Here is a 123-residue protein sequence, read N- to C-terminus: SOSS complex subunit C homolog (123 aa).

It belongs to the SOSS-C family.

The polypeptide is SOSS complex subunit C homolog (Drosophila ananassae (Fruit fly)).